Here is a 236-residue protein sequence, read N- to C-terminus: Probable transcriptional regulatory protein FP0835 (236 aa).

This sequence belongs to the TACO1 family.

The protein resides in the cytoplasm. The chain is Probable transcriptional regulatory protein FP0835 from Flavobacterium psychrophilum (strain ATCC 49511 / DSM 21280 / CIP 103535 / JIP02/86).